A 1630-amino-acid polypeptide reads, in one-letter code: Patronin (1630 aa).

The region spanning 156 to 288 (QSYEQALLGW…LVVLLTDLFN (133 aa)) is the Calponin-homology (CH) domain. Disordered stretches follow at residues 311 to 333 (NSFG…VQSN) and 355 to 446 (ASMH…DQLN). Residues 319–333 (RRSTPPNEYQTVQSN) show a composition bias toward polar residues. A Phosphothreonine modification is found at T322. The span at 358 to 394 (HSQQQQQLHQQQQHQQQYHQQPLQQHPSQSQLQIQQQ) shows a compositional bias: low complexity. A compositionally biased stretch (basic and acidic residues) spans 404 to 419 (QAKEKTNVESKADERG). Residues S422, S431, S441, S460, S463, and S466 each carry the phosphoserine modification. The segment covering 432–446 (QLTIENFGGSQDQLN) has biased composition (polar residues). The segment at 486 to 589 (LQLGYDTDSG…SMPASPAAWQ (104 aa)) is disordered. T492 bears the Phosphothreonine mark. Phosphoserine is present on residues S494, S496, S513, and S530. Residues 495 to 507 (GSEKQDRETEKYS) show a composition bias toward basic and acidic residues. Positions 513–529 (SVDNVPTVSSHNLSNAG) are enriched in polar residues. Over residues 576–587 (SSTSSMPASPAA) the composition is skewed to low complexity. Positions 601 to 639 (ENASKLSTIRMKLEEKRRRIEQDKRKIEMALLRHQEKED) form a coiled coil. 7 disordered regions span residues 726-753 (VSAY…PMPM), 872-967 (QQHQ…GMPM), 1005-1042 (DFVH…YDSG), 1055-1186 (NLTY…NKYT), 1200-1241 (GAMS…NAEA), 1284-1315 (EAKA…EEQM), and 1335-1459 (EREG…GVER). 2 stretches are compositionally biased toward low complexity: residues 738-750 (PYQQ…QQQP) and 872-896 (QQHQ…SPGS). A compositionally biased stretch (gly residues) spans 902-914 (NGGGGGGGGGGGE). Polar residues predominate over residues 919–947 (FQVQASPQHGQRQVSGSNGVQRQQSLTNL). Composition is skewed to low complexity over residues 956–967 (PQNMGMPMGMPM) and 1008–1036 (HQQQ…GSSS). Residues S1034, S1035, S1036, and S1067 each carry the phosphoserine modification. The segment covering 1065 to 1074 (RPSIQANSFQ) has biased composition (polar residues). Basic residues predominate over residues 1105 to 1116 (RPKPPLRAKRSP). A compositionally biased stretch (polar residues) spans 1167 to 1184 (GLNNSNSVKSPGNATYNK). Positions 1218-1230 (QSPQQTQQPMSPT) are enriched in low complexity. S1219 and S1228 each carry phosphoserine. Positions 1277 to 1343 (QRRQQQEEAK…AEREGKTLDR (67 aa)) form a coiled coil. Residues 1335-1348 (EREGKTLDRPDLHV) show a composition bias toward basic and acidic residues. The segment covering 1363 to 1374 (RQQRTTRPRPKT) has biased composition (basic residues). The segment covering 1382–1400 (VDISEASSISSRGKKGSSS) has biased composition (low complexity). Residues S1398, S1399, and S1400 each carry the phosphoserine modification. The segment covering 1401-1412 (NLTGYGQLSSNS) has biased composition (polar residues). A compositionally biased stretch (basic and acidic residues) spans 1450–1459 (TSREPAGVER). The region spanning 1489–1623 (GPKLYKQPAA…QGKRVQLPSK (135 aa)) is the CKK domain.

This sequence belongs to the CAMSAP1 family. Interacts with msps. Associates with the minus end of the microtubules.

Its subcellular location is the cytoplasm. The protein resides in the cytoskeleton. It localises to the microtubule organizing center. The protein localises to the spindle pole body. It is found in the centrosome. Its subcellular location is the perinuclear region. Functionally, key microtubule-organizing protein that specifically binds the minus-end of microtubules and regulates their dynamics and organization. Involved in mitotic spindle assembly. Regulates microtubule (MT) severing. Antagonizes the activity of the kinesin-13 depolymerase Klp10A thereby switching off the depolymerization of the MTs at their pole-associated minus ends, which turns off poleward flux and induces anaphase B spindle elongation. Involved in asymmetric cell division of sensory organ precursor (SOP) cells by playing a role in the asymmetric localization of Sara-expressing endosomes to the pIIa daughter cell but not to the pIIb cell. Klp98A targets Sara-expressing endosomes to the central spindle which is symmetrically arranged in early cell division. During late cytokinesis, central spindle asymmetry is generated by enrichment of Patronin on the pIIb side which protects microtubules from depolymerization by Klp10A while unprotected microtubules on the pIIa side are disassembled by Klp10A, leading to the asymmetric delivery of Sara-expressing endosomes to the pIIa daughter cell. In fat body cells, part of perinuclear non-centrosomal microtubule-organizing centers (ncMTOCs) which function to accommodate the organization of microtubule (MT) networks to control nuclear positioning and dynein motor-based retrograde endosomal trafficking. Within the ncMTOC, Msp300 and shot anchors the ncMTOC at the nuclear surface and recruits the MT minus-end regulators Patronin and Nin for assembly, anchoring and/or stabilization of circumferential and radial MTs at the ncMTOCs. This protein, and perhaps Nin, recruits msps to the ncMTOC for the gamma-tubulin-independent elongation of radial MTs. The polypeptide is Patronin (Patronin) (Drosophila melanogaster (Fruit fly)).